A 396-amino-acid polypeptide reads, in one-letter code: (S)-8-oxocitronellyl enol synthase ISY2 (396 aa).

NADP(+)-binding positions include 38 to 40 (TGL), 66 to 67 (RR), 84 to 85 (DV), 108 to 109 (TW), glutamine 146, tyrosine 182, isoleucine 209, and 216 to 218 (SMM). Tyrosine 182 is an active-site residue.

This sequence belongs to the short-chain dehydrogenases/reductases (SDR) family.

It catalyses the reaction (S)-8-oxocitronellyl enol + NADP(+) = (6E)-8-oxogeranial + NADPH + H(+). The enzyme catalyses (S)-8-oxocitronellyl enol + NAD(+) = (6E)-8-oxogeranial + NADH + H(+). Its function is as follows. Iridoid synthase that catalyzes the first step in generation of the iridoid ring scaffold using the linear monoterpene (6E)-8-oxogeranial as substrate. Iridoids comprise a large family of distinctive bicyclic monoterpenes that possess a wide range of pharmacological activities, including anticancer, anti-inflammatory, antifungal and antibacterial activities. Catalyzes the conversion of the linear monoterpene (6E)-8-oxogeranial to (S)-8-oxocitronellyl enol, a precursor of nepetalactones, which are metabolites that are both insect-repellent and have euphoric effect in cats. The protein is (S)-8-oxocitronellyl enol synthase ISY2 of Nepeta racemosa (Catmint).